The primary structure comprises 218 residues: Pyridoxine/pyridoxamine 5'-phosphate oxidase (218 aa).

Substrate is bound by residues 12 to 15 (RMSY) and R70. Residues 65–70 (RTVLLR), 80–81 (YT), K87, and Q109 contribute to the FMN site. Substrate-binding residues include Y127, R131, and S135. FMN contacts are provided by residues 145–146 (QS) and W191. 197–199 (RLH) lines the substrate pocket. R201 contributes to the FMN binding site.

The protein belongs to the pyridoxamine 5'-phosphate oxidase family. Homodimer. Requires FMN as cofactor.

The catalysed reaction is pyridoxamine 5'-phosphate + O2 + H2O = pyridoxal 5'-phosphate + H2O2 + NH4(+). The enzyme catalyses pyridoxine 5'-phosphate + O2 = pyridoxal 5'-phosphate + H2O2. Its pathway is cofactor metabolism; pyridoxal 5'-phosphate salvage; pyridoxal 5'-phosphate from pyridoxamine 5'-phosphate: step 1/1. It participates in cofactor metabolism; pyridoxal 5'-phosphate salvage; pyridoxal 5'-phosphate from pyridoxine 5'-phosphate: step 1/1. Its function is as follows. Catalyzes the oxidation of either pyridoxine 5'-phosphate (PNP) or pyridoxamine 5'-phosphate (PMP) into pyridoxal 5'-phosphate (PLP). The polypeptide is Pyridoxine/pyridoxamine 5'-phosphate oxidase (Acinetobacter baylyi (strain ATCC 33305 / BD413 / ADP1)).